Reading from the N-terminus, the 226-residue chain is 7-cyano-7-deazaguanine synthase (226 aa).

10 to 20 (FSGGQDSTTLA) contacts ATP. Positions 190, 205, 208, and 211 each coordinate Zn(2+).

Belongs to the QueC family. Zn(2+) serves as cofactor.

The catalysed reaction is 7-carboxy-7-deazaguanine + NH4(+) + ATP = 7-cyano-7-deazaguanine + ADP + phosphate + H2O + H(+). It functions in the pathway purine metabolism; 7-cyano-7-deazaguanine biosynthesis. Catalyzes the ATP-dependent conversion of 7-carboxy-7-deazaguanine (CDG) to 7-cyano-7-deazaguanine (preQ(0)). In Helicobacter pylori (strain ATCC 700392 / 26695) (Campylobacter pylori), this protein is 7-cyano-7-deazaguanine synthase.